A 278-amino-acid polypeptide reads, in one-letter code: Elongation factor Ts 1, mitochondrial (278 aa).

Belongs to the EF-Ts family.

It localises to the mitochondrion. In terms of biological role, associates with the EF-Tu.GDP complex and induces the exchange of GDP to GTP. It remains bound to the aminoacyl-tRNA.EF-Tu.GTP complex up to the GTP hydrolysis stage on the ribosome. In Trypanosoma cruzi (strain CL Brener), this protein is Elongation factor Ts 1, mitochondrial.